A 1778-amino-acid polypeptide reads, in one-letter code: Nuclear receptor corepressor 1 (1778 aa).

Residues 125-176 enclose the SANT domain; sequence DRLEEWSPEERSLFKSRQADHVKIFHGLTEFFVDKTASDLVLFYYMNKKTED. The 43-residue stretch at 356-398 folds into the Myb-like domain; the sequence is WTDDEKTKLVTLINSSPTLDWVSISEGMNRRPNECKMQYDAMN. Positions 409 to 421 are enriched in acidic residues; it reads VDEEDGNGQEEGG. Disordered regions lie at residues 409-671, 992-1024, 1195-1218, 1276-1339, 1414-1434, and 1646-1718; these read VDEE…TVST, SLTP…AGRS, KLQQ…ATPQ, QHLQ…SRSV, PPKT…RTLS, and AAPT…PPLP. Low complexity-rich tracts occupy residues 431 to 442 and 450 to 469; these read SSAAARRSGLAR and TPRA…VTRA. Positions 478–493 are enriched in acidic residues; the sequence is DLGEEIDEMEIEDNDE. The span at 494 to 513 shows a compositional bias: basic and acidic residues; sequence DASRGSRGKDSKAPSDRDGS. 2 stretches are compositionally biased toward acidic residues: residues 517–545 and 599–616; these read MEGD…EEEE and ESDD…DVDE. Composition is skewed to low complexity over residues 626–639 and 649–671; these read SSSS…SVGG and LVQQ…TVST. A compositionally biased stretch (low complexity) spans 1276–1285; that stretch reads QHLQQQQQHH. Residues 1687 to 1696 show a composition bias toward low complexity; the sequence is SSVNSNVSDV.

The protein belongs to the N-CoR nuclear receptor corepressors family. In terms of assembly, interacts with gex-3. Interacts (via C-terminus) with nhr-60. In terms of tissue distribution, in larvae, expressed in pharyngeal neurons, ventral and dorsal nerve cords, tail neurons, egg-laying neurons and egg-laying muscles. Detected in the neurons of the pharyngeal nerve ring, head neurons, tail neurons and egg-laying muscles in adults. Detected in male-specific tail ganglia and rays in males.

Its subcellular location is the nucleus. Mediates transcriptional repression by certain nuclear receptors. Plays a role in development and neuronal function. May play a role in muscle-specific oxidative mitochondrial metabolism. This Caenorhabditis elegans protein is Nuclear receptor corepressor 1.